Here is a 428-residue protein sequence, read N- to C-terminus: Cytochrome c biogenesis protein CcsB (428 aa).

3 consecutive transmembrane segments (helical) span residues 14–34 (LRFA…GTFI), 72–92 (SIWF…CSFR), and 162–182 (IGPL…AYGS).

The protein belongs to the Ccs1/CcsB family. In terms of assembly, may interact with CcsA.

It localises to the cellular thylakoid membrane. Functionally, required during biogenesis of c-type cytochromes (cytochrome c6 and cytochrome f) at the step of heme attachment. The chain is Cytochrome c biogenesis protein CcsB from Prochlorococcus marinus (strain MIT 9312).